The sequence spans 555 residues: Dihydroxy-acid dehydratase (555 aa).

Residue aspartate 78 coordinates Mg(2+). Residue cysteine 119 participates in [2Fe-2S] cluster binding. Residues aspartate 120 and lysine 121 each coordinate Mg(2+). An N6-carboxylysine modification is found at lysine 121. Cysteine 195 serves as a coordination point for [2Fe-2S] cluster. Glutamate 444 contributes to the Mg(2+) binding site. Serine 470 functions as the Proton acceptor in the catalytic mechanism.

It belongs to the IlvD/Edd family. As to quaternary structure, homodimer. [2Fe-2S] cluster serves as cofactor. The cofactor is Mg(2+).

It carries out the reaction (2R)-2,3-dihydroxy-3-methylbutanoate = 3-methyl-2-oxobutanoate + H2O. The enzyme catalyses (2R,3R)-2,3-dihydroxy-3-methylpentanoate = (S)-3-methyl-2-oxopentanoate + H2O. It functions in the pathway amino-acid biosynthesis; L-isoleucine biosynthesis; L-isoleucine from 2-oxobutanoate: step 3/4. The protein operates within amino-acid biosynthesis; L-valine biosynthesis; L-valine from pyruvate: step 3/4. Its function is as follows. Functions in the biosynthesis of branched-chain amino acids. Catalyzes the dehydration of (2R,3R)-2,3-dihydroxy-3-methylpentanoate (2,3-dihydroxy-3-methylvalerate) into 2-oxo-3-methylpentanoate (2-oxo-3-methylvalerate) and of (2R)-2,3-dihydroxy-3-methylbutanoate (2,3-dihydroxyisovalerate) into 2-oxo-3-methylbutanoate (2-oxoisovalerate), the penultimate precursor to L-isoleucine and L-valine, respectively. The sequence is that of Dihydroxy-acid dehydratase from Dehalococcoides mccartyi (strain ATCC BAA-2266 / KCTC 15142 / 195) (Dehalococcoides ethenogenes (strain 195)).